Here is a 465-residue protein sequence, read N- to C-terminus: Ribulose bisphosphate carboxylase large chain (465 aa).

Lys4 is modified (N6,N6,N6-trimethyllysine). Residues Asn113 and Thr163 each coordinate substrate. Lys165 functions as the Proton acceptor in the catalytic mechanism. Lys167 lines the substrate pocket. 3 residues coordinate Mg(2+): Lys191, Asp193, and Glu194. Lys191 carries the post-translational modification N6-carboxylysine. Catalysis depends on His284, which acts as the Proton acceptor. Residues Arg285, His317, and Ser369 each coordinate substrate.

This sequence belongs to the RuBisCO large chain family. Type I subfamily. Heterohexadecamer of 8 large chains and 8 small chains; disulfide-linked. The disulfide link is formed within the large subunit homodimers. Mg(2+) serves as cofactor. The disulfide bond which can form in the large chain dimeric partners within the hexadecamer appears to be associated with oxidative stress and protein turnover.

The protein resides in the plastid. The protein localises to the chloroplast. It catalyses the reaction 2 (2R)-3-phosphoglycerate + 2 H(+) = D-ribulose 1,5-bisphosphate + CO2 + H2O. The enzyme catalyses D-ribulose 1,5-bisphosphate + O2 = 2-phosphoglycolate + (2R)-3-phosphoglycerate + 2 H(+). Functionally, ruBisCO catalyzes two reactions: the carboxylation of D-ribulose 1,5-bisphosphate, the primary event in carbon dioxide fixation, as well as the oxidative fragmentation of the pentose substrate in the photorespiration process. Both reactions occur simultaneously and in competition at the same active site. The chain is Ribulose bisphosphate carboxylase large chain from Ulmus alata (Winged elm).